The sequence spans 209 residues: MQSKFIVIEGLDGAGKSTAISFVRKYLEKNNLAAIYTREPGGTKIAEELRNLVLHNKYDEEIHSDSELLMIYAGRVQHYRNLIAPALEKGINVVSDRFYWSSMAYQGGGRGVELSKIRALNDNFLNGCEPDLVIYLDIDPILGLQRAQKVGSPDRIEKAGLEFFNRTRKVFKDLVKDLDNAIEIDAAKSIQEVEKQIYLILDKHFNFQN.

An ATP-binding site is contributed by 10-17 (GLDGAGKS).

It belongs to the thymidylate kinase family.

It catalyses the reaction dTMP + ATP = dTDP + ADP. In terms of biological role, phosphorylation of dTMP to form dTDP in both de novo and salvage pathways of dTTP synthesis. In Francisella tularensis subsp. holarctica (strain FTNF002-00 / FTA), this protein is Thymidylate kinase.